Consider the following 184-residue polypeptide: Ribosome-recycling factor (184 aa).

It belongs to the RRF family.

It is found in the cytoplasm. In terms of biological role, responsible for the release of ribosomes from messenger RNA at the termination of protein biosynthesis. May increase the efficiency of translation by recycling ribosomes from one round of translation to another. The polypeptide is Ribosome-recycling factor (Leptospira borgpetersenii serovar Hardjo-bovis (strain JB197)).